A 147-amino-acid polypeptide reads, in one-letter code: Protein SprT-like (147 aa).

Residues 9–142 (AKVKEISLTY…CGKCRGKLIL (134 aa)) enclose the SprT-like domain. Histidine 65 serves as a coordination point for Zn(2+). Glutamate 66 is an active-site residue. Histidine 69 contacts Zn(2+).

This sequence belongs to the SprT family. Zn(2+) serves as cofactor.

It localises to the cytoplasm. This chain is Protein SprT-like (yciD), found in Lactococcus lactis subsp. lactis (strain IL1403) (Streptococcus lactis).